Here is a 563-residue protein sequence, read N- to C-terminus: Ribulokinase (563 aa).

It belongs to the ribulokinase family.

The catalysed reaction is D-ribulose + ATP = D-ribulose 5-phosphate + ADP + H(+). It carries out the reaction L-ribulose + ATP = L-ribulose 5-phosphate + ADP + H(+). It functions in the pathway carbohydrate degradation; L-arabinose degradation via L-ribulose; D-xylulose 5-phosphate from L-arabinose (bacterial route): step 2/3. In Halalkalibacterium halodurans (strain ATCC BAA-125 / DSM 18197 / FERM 7344 / JCM 9153 / C-125) (Bacillus halodurans), this protein is Ribulokinase.